A 467-amino-acid polypeptide reads, in one-letter code: MEVYNTLSRKIEKLEDIVDGKRVKMYVCGITAYDYSHIGHARSAVFFDVFRRYLEYLGYEVVYVQNFTDVDDKIINRAVKEGKTQKEVAEKFIEEYLKDMEALNVKKPTYQPKVTEHIPDIIEFIQNLIEKGYAYVIDGDVYFHVPAFEHYGELSKQSLEELNRHRIEPDERKRDVKDFALWKSAKEADLKAQAVFDSPWGRGRPGWHIECSVMSAKYLGVPFDIHGGGKDLIFPHHENERAQSFARFGVEPVKIWVHNDFIRIKGEKMSKSLGNIVRIRDVLQRYEGEVLRYFLLTAHYRSPLDYTEEALERAKRAYEYLRSALINLDMEIAYLKTFGDRKEGNQVDVEDYIRRFEEAMNRDLHTPDAIAVLHEFAGLINKSLYELSLNQAEELYEAFKRLCGVLGLFEKMERVPALSREDAEKVVERERARKERNFELADAIRDEFAKRGIRLIDTPKGTRWRVE.

Cys-28 is a Zn(2+) binding site. Positions 30–40 (ITAYDYSHIGH) match the 'HIGH' region motif. 3 residues coordinate Zn(2+): Cys-211, His-236, and Glu-240. The 'KMSKS' region motif lies at 268–272 (KMSKS). An ATP-binding site is contributed by Lys-271.

The protein belongs to the class-I aminoacyl-tRNA synthetase family. Zn(2+) serves as cofactor.

The protein localises to the cytoplasm. The enzyme catalyses tRNA(Cys) + L-cysteine + ATP = L-cysteinyl-tRNA(Cys) + AMP + diphosphate. The chain is Cysteine--tRNA ligase (cysS) from Archaeoglobus fulgidus (strain ATCC 49558 / DSM 4304 / JCM 9628 / NBRC 100126 / VC-16).